The sequence spans 921 residues: Isoleucine--tRNA ligase (921 aa).

The 'HIGH' region signature appears at 57–67 (PYANGNIHVGT). Residue Glu551 coordinates L-isoleucyl-5'-AMP. The short motif at 592-596 (KMSKS) is the 'KMSKS' region element. Lys595 contacts ATP. Residues Cys885, Cys888, Cys905, and Cys908 each coordinate Zn(2+).

It belongs to the class-I aminoacyl-tRNA synthetase family. IleS type 1 subfamily. In terms of assembly, monomer. The cofactor is Zn(2+).

It is found in the cytoplasm. The catalysed reaction is tRNA(Ile) + L-isoleucine + ATP = L-isoleucyl-tRNA(Ile) + AMP + diphosphate. Its function is as follows. Catalyzes the attachment of isoleucine to tRNA(Ile). As IleRS can inadvertently accommodate and process structurally similar amino acids such as valine, to avoid such errors it has two additional distinct tRNA(Ile)-dependent editing activities. One activity is designated as 'pretransfer' editing and involves the hydrolysis of activated Val-AMP. The other activity is designated 'posttransfer' editing and involves deacylation of mischarged Val-tRNA(Ile). In Kosmotoga olearia (strain ATCC BAA-1733 / DSM 21960 / TBF 19.5.1), this protein is Isoleucine--tRNA ligase.